Reading from the N-terminus, the 472-residue chain is Sulfate adenylyltransferase subunit 1 (472 aa).

One can recognise a tr-type G domain in the interval 22–239 (KELLRFLTCG…TVPIAGDKNY (218 aa)). The tract at residues 31-38 (GSVDDGKS) is G1. 31-38 (GSVDDGKS) serves as a coordination point for GTP. The G2 stretch occupies residues 89-93 (GITID). Residues 110–113 (DTPG) form a G3 region. Residues 110 to 114 (DTPGH) and 165 to 168 (NKMD) each bind GTP. A G4 region spans residues 165–168 (NKMD). Positions 202–204 (SAL) are G5.

Belongs to the TRAFAC class translation factor GTPase superfamily. Classic translation factor GTPase family. CysN/NodQ subfamily. As to quaternary structure, heterodimer composed of CysD, the smaller subunit, and CysN.

It carries out the reaction sulfate + ATP + H(+) = adenosine 5'-phosphosulfate + diphosphate. It functions in the pathway sulfur metabolism; hydrogen sulfide biosynthesis; sulfite from sulfate: step 1/3. Functionally, with CysD forms the ATP sulfurylase (ATPS) that catalyzes the adenylation of sulfate producing adenosine 5'-phosphosulfate (APS) and diphosphate, the first enzymatic step in sulfur assimilation pathway. APS synthesis involves the formation of a high-energy phosphoric-sulfuric acid anhydride bond driven by GTP hydrolysis by CysN coupled to ATP hydrolysis by CysD. The protein is Sulfate adenylyltransferase subunit 1 of Cellvibrio japonicus (strain Ueda107) (Pseudomonas fluorescens subsp. cellulosa).